Here is a 504-residue protein sequence, read N- to C-terminus: Argininosuccinate lyase 2 (504 aa).

The protein belongs to the lyase 1 family. Argininosuccinate lyase subfamily.

The protein localises to the cytoplasm. The enzyme catalyses 2-(N(omega)-L-arginino)succinate = fumarate + L-arginine. Its pathway is amino-acid biosynthesis; L-arginine biosynthesis; L-arginine from L-ornithine and carbamoyl phosphate: step 3/3. The protein is Argininosuccinate lyase 2 of Agrobacterium fabrum (strain C58 / ATCC 33970) (Agrobacterium tumefaciens (strain C58)).